A 209-amino-acid polypeptide reads, in one-letter code: COP9 signalosome complex subunit 8 (209 aa).

The 172-residue stretch at 8–179 (DNAFSFRKLL…GTLDVSLNRF (172 aa)) folds into the PCI domain. Position 175 is a phosphoserine (S175).

Belongs to the CSN8 family. In terms of assembly, component of the CSN complex, composed of COPS1/GPS1, COPS2, COPS3, COPS4, COPS5, COPS6, COPS7 (COPS7A or COPS7B), COPS8 and COPS9. In the complex, it probably interacts directly with COPS3, COPS4 and COPS7 (COPS7A or COPS7B). As to expression, widely expressed.

It is found in the cytoplasm. Its subcellular location is the nucleus. Its function is as follows. Component of the COP9 signalosome complex (CSN), a complex involved in various cellular and developmental processes. The CSN complex is an essential regulator of the ubiquitin (Ubl) conjugation pathway by mediating the deneddylation of the cullin subunits of SCF-type E3 ligase complexes, leading to decrease the Ubl ligase activity of SCF-type complexes such as SCF, CSA or DDB2. The complex is also involved in phosphorylation of p53/TP53, c-jun/JUN, IkappaBalpha/NFKBIA, ITPK1 and IRF8/ICSBP, possibly via its association with CK2 and PKD kinases. CSN-dependent phosphorylation of TP53 and JUN promotes and protects degradation by the Ubl system, respectively. The polypeptide is COP9 signalosome complex subunit 8 (Cops8) (Mus musculus (Mouse)).